A 473-amino-acid chain; its full sequence is O-methyltransferase ARMGADRAFT_1088206 (473 aa).

Residues A276–G277, D299, D330–M331, and R348 each bind S-adenosyl-L-methionine. H352 functions as the Proton acceptor in the catalytic mechanism.

Belongs to the class I-like SAM-binding methyltransferase superfamily. Cation-independent O-methyltransferase family.

It functions in the pathway secondary metabolite biosynthesis. In terms of biological role, O-methyltransferase, part of the gene cluster that mediates the biosynthesis of melleolides, a range of antifungal and phytotoxic polyketide derivatives composed of an orsellinic acid (OA) moiety esterified to various sesquiterpene alcohols. The first step in melleolides biosynthesis is performed by the delta(6)-protoilludene synthase PRO1 which catalyzes the cyclization of farnesyl diphosphate to protoilludene. The orsellinic acid synthase armB produces OA by condensing acetyl-CoA with 3 malonyl-CoA units in a three-round chain elongation reaction folowed by a C2-C7 ring closure. ArmB further catalyzes the trans-esterification of OA to the various sesquiterpene alcohols resulting from the hydroxylation of protoilludene. The melleolides cluster also includes 5 cytochrome P450 monooxygenases, 4 NAD(+)-dependent oxidoreductases, one flavin-dependent oxidoreductase, and one O-methyltransferase. The cytochrome P450 monooxygenases may be involved in protoilludene hydroxylation to elaborate melleolides with multiple alcohol groups, such as melleolide D, which carries alcohol functionalities at C-4, C-5, C-10, and C-13. The role of the NAD(+)-dependent enzymes remains unknown. Numerous melleolides, including arnamial, show 5'-O-methylation of the aromatic moiety which may be catalyzed by the methyltransferase encoded in the cluster. The flavin-dependent oxidoreductase might represent the dehydrogenase yielding the aldehyde in position 1 of arnamial and other melleolides. Finally, several halogenase localized outside of the cluster, are able to catalyze the transfer of a single chlorine atom to the melleolide backbone, resulting in a 6'-chloromelleolide product. This is O-methyltransferase ARMGADRAFT_1088206 from Armillaria gallica (Bulbous honey fungus).